The chain runs to 396 residues: Elongation factor Tu 2 (396 aa).

The region spanning 10-206 (KPHINVGTIG…AMDAHIPQPE (197 aa)) is the tr-type G domain. The tract at residues 19-26 (GHVDHGKT) is G1. 19–26 (GHVDHGKT) is a binding site for GTP. Residue T26 coordinates Mg(2+). A G2 region spans residues 60–64 (GITIA). Residues 81–84 (DCPG) are G3. GTP-binding positions include 81–85 (DCPGH) and 136–139 (NKAD). The G4 stretch occupies residues 136 to 139 (NKAD). The tract at residues 174 to 176 (SAL) is G5.

Belongs to the TRAFAC class translation factor GTPase superfamily. Classic translation factor GTPase family. EF-Tu/EF-1A subfamily. In terms of assembly, monomer.

It localises to the cytoplasm. The enzyme catalyses GTP + H2O = GDP + phosphate + H(+). Functionally, GTP hydrolase that promotes the GTP-dependent binding of aminoacyl-tRNA to the A-site of ribosomes during protein biosynthesis. The sequence is that of Elongation factor Tu 2 from Halorhodospira halophila (strain DSM 244 / SL1) (Ectothiorhodospira halophila (strain DSM 244 / SL1)).